A 113-amino-acid chain; its full sequence is Protein translation factor SUI1 homolog 1 (113 aa).

Residues 1-24 (MSELDSQVPTAFDPFADANAEDSG) form a disordered region. Serine 2 bears the N-acetylserine mark.

This sequence belongs to the SUI1 family.

In terms of biological role, probably involved in translation. This Arabidopsis thaliana (Mouse-ear cress) protein is Protein translation factor SUI1 homolog 1.